We begin with the raw amino-acid sequence, 168 residues long: Large ribosomal subunit protein bL17 (168 aa).

The segment covering 121-146 (AEAEGGEEKAEQKTEKKAAKAKEPKA) has biased composition (basic and acidic residues). Residues 121-168 (AEAEGGEEKAEQKTEKKAAKAKEPKAAKAPKKAAAKPKAKAEKKGAEE) are disordered. Residues 148–158 (KAPKKAAAKPK) are compositionally biased toward basic residues. The segment covering 159–168 (AKAEKKGAEE) has biased composition (basic and acidic residues).

It belongs to the bacterial ribosomal protein bL17 family. In terms of assembly, part of the 50S ribosomal subunit. Contacts protein L32.

This chain is Large ribosomal subunit protein bL17, found in Anaeromyxobacter sp. (strain Fw109-5).